The chain runs to 148 residues: Putative nickel-responsive regulator (148 aa).

Ni(2+) contacts are provided by His88, His99, His101, and Cys107.

It belongs to the transcriptional regulatory CopG/NikR family. Requires Ni(2+) as cofactor.

Its function is as follows. Transcriptional regulator. The polypeptide is Putative nickel-responsive regulator (Helicobacter pylori (strain G27)).